Here is a 319-residue protein sequence, read N- to C-terminus: ATP-dependent 6-phosphofructokinase (319 aa).

G11 serves as a coordination point for ATP. 21–25 (RAVVR) contributes to the ADP binding site. Residues 72-73 (RY) and 102-105 (GDGS) contribute to the ATP site. Position 103 (D103) interacts with Mg(2+). Residue 125-127 (TID) coordinates substrate. Residue D127 is the Proton acceptor of the active site. Residue R154 coordinates ADP. Residues R162 and 169–171 (MGR) each bind substrate. Residues 185-187 (GAE), R211, and 213-215 (KKH) each bind ADP. Residues E222, R243, and 249 to 252 (HVQR) each bind substrate.

Belongs to the phosphofructokinase type A (PFKA) family. ATP-dependent PFK group I subfamily. Prokaryotic clade 'B1' sub-subfamily. Homotetramer. It depends on Mg(2+) as a cofactor.

The protein resides in the cytoplasm. The enzyme catalyses beta-D-fructose 6-phosphate + ATP = beta-D-fructose 1,6-bisphosphate + ADP + H(+). It functions in the pathway carbohydrate degradation; glycolysis; D-glyceraldehyde 3-phosphate and glycerone phosphate from D-glucose: step 3/4. Its activity is regulated as follows. Allosterically activated by ADP and other diphosphonucleosides, and allosterically inhibited by phosphoenolpyruvate. Its function is as follows. Catalyzes the phosphorylation of D-fructose 6-phosphate to fructose 1,6-bisphosphate by ATP, the first committing step of glycolysis. The sequence is that of ATP-dependent 6-phosphofructokinase from Listeria monocytogenes serotype 4a (strain HCC23).